The chain runs to 522 residues: Lysine--tRNA ligase (522 aa).

The short motif at 44–52 (PSGLPHIGT) is the 'HIGH' region element. Positions 290-294 (KISKS) match the 'KMSKS' region motif. Position 293 (lysine 293) interacts with ATP.

This sequence belongs to the class-I aminoacyl-tRNA synthetase family.

Its subcellular location is the cytoplasm. The enzyme catalyses tRNA(Lys) + L-lysine + ATP = L-lysyl-tRNA(Lys) + AMP + diphosphate. The polypeptide is Lysine--tRNA ligase (Rickettsia rickettsii (strain Iowa)).